The sequence spans 239 residues: Ribonuclease Le2 (239 aa).

Disulfide bonds link C5-C22, C13-C58, C21-C126, C66-C118, and C191-C225. Catalysis depends on residues H51, E111, and H115.

It belongs to the RNase T2 family.

The enzyme catalyses a ribonucleotidyl-ribonucleotide-RNA + H2O = a 3'-end 3'-phospho-ribonucleotide-RNA + a 5'-end dephospho-ribonucleoside-RNA + H(+). In terms of biological role, this is a base non-specific and adenylic acid preferential ribonuclease. The sequence is that of Ribonuclease Le2 from Lentinula edodes (Shiitake mushroom).